Consider the following 195-residue polypeptide: Cytochrome c oxidase assembly protein CtaG (195 aa).

The Cytoplasmic segment spans residues 1–7; that stretch reads MSGGKPR. A helical; Signal-anchor for type II membrane protein transmembrane segment spans residues 8-30; the sequence is SNTRTVAMLAGVVVLMGALSWAA. Over 31-195 the chain is Periplasmic; it reads VPFYSWFCKV…LDAKTEPTVN (165 aa).

Belongs to the COX11/CtaG family.

The protein localises to the cell inner membrane. Functionally, exerts its effect at some terminal stage of cytochrome c oxidase synthesis, probably by being involved in the insertion of the copper B into subunit I. The sequence is that of Cytochrome c oxidase assembly protein CtaG from Paracoccus denitrificans (strain Pd 1222).